The following is a 155-amino-acid chain: Transcription antitermination protein NusB (155 aa).

Belongs to the NusB family.

Involved in transcription antitermination. Required for transcription of ribosomal RNA (rRNA) genes. Binds specifically to the boxA antiterminator sequence of the ribosomal RNA (rrn) operons. The polypeptide is Transcription antitermination protein NusB (Ralstonia nicotianae (strain ATCC BAA-1114 / GMI1000) (Ralstonia solanacearum)).